A 368-amino-acid polypeptide reads, in one-letter code: S-adenosylmethionine:tRNA ribosyltransferase-isomerase (368 aa).

The protein belongs to the QueA family. In terms of assembly, monomer.

Its subcellular location is the cytoplasm. It catalyses the reaction 7-aminomethyl-7-carbaguanosine(34) in tRNA + S-adenosyl-L-methionine = epoxyqueuosine(34) in tRNA + adenine + L-methionine + 2 H(+). It participates in tRNA modification; tRNA-queuosine biosynthesis. Transfers and isomerizes the ribose moiety from AdoMet to the 7-aminomethyl group of 7-deazaguanine (preQ1-tRNA) to give epoxyqueuosine (oQ-tRNA). This is S-adenosylmethionine:tRNA ribosyltransferase-isomerase from Methylorubrum extorquens (strain CM4 / NCIMB 13688) (Methylobacterium extorquens).